Here is a 92-residue protein sequence, read N- to C-terminus: MTYLLKKNPFVANNLLKKINKLNRKAQKEIIITWSRGSTIIPIMIGHTIAIHNGKEHLPIYIMDDMVGHKLGEFAATLNFRGHEKGDNKSRR.

The protein belongs to the universal ribosomal protein uS19 family.

It is found in the plastid. Protein S19 forms a complex with S13 that binds strongly to the 16S ribosomal RNA. This Cuscuta gronovii (Common dodder) protein is Small ribosomal subunit protein uS19c.